The following is an 85-amino-acid chain: U4-theraphotoxin-Hhn1a (85 aa).

A signal peptide spans 1-22 (MKVTLIAILTCAAVLVLHTTAA). Positions 23–48 (EELEAEGQLMEVGMPDTELAAVDEER) are excised as a propeptide. 3 disulfide bridges follow: C52/C66, C56/C77, and C71/C82.

The protein belongs to the neurotoxin 12 (Hwtx-2) family. 02 (Hwtx-2) subfamily. In terms of assembly, monomer. As to expression, expressed by the venom gland.

The protein resides in the secreted. Its function is as follows. Neurotoxin active on both insects and mammals. The sequence is that of U4-theraphotoxin-Hhn1a from Cyriopagopus hainanus (Chinese bird spider).